A 55-amino-acid chain; its full sequence is Trypsin inhibitor (55 aa).

The region spanning 1–55 (AHMDCTEFNPLCRCNKMLGDLICAVIGDAKEEHRNMCALCCEHPGGFEYSNGPCE) is the Kazal-like domain. 4 cysteine pairs are disulfide-bonded: Cys5/Cys40, Cys12/Cys41, Cys14/Cys37, and Cys23/Cys54.

It localises to the secreted. Its function is as follows. Potent inhibitor of trypsin. This is Trypsin inhibitor from Halocynthia roretzi (Sea squirt).